Consider the following 700-residue polypeptide: Elongation factor G (700 aa).

One can recognise a tr-type G domain in the interval 8–290 (ERYRNIGISA…AVVEYLPAPT (283 aa)). GTP contacts are provided by residues 17–24 (AHIDAGKT), 88–92 (DTPGH), and 142–145 (NKMD).

Belongs to the TRAFAC class translation factor GTPase superfamily. Classic translation factor GTPase family. EF-G/EF-2 subfamily.

It localises to the cytoplasm. In terms of biological role, catalyzes the GTP-dependent ribosomal translocation step during translation elongation. During this step, the ribosome changes from the pre-translocational (PRE) to the post-translocational (POST) state as the newly formed A-site-bound peptidyl-tRNA and P-site-bound deacylated tRNA move to the P and E sites, respectively. Catalyzes the coordinated movement of the two tRNA molecules, the mRNA and conformational changes in the ribosome. In Haemophilus influenzae (strain 86-028NP), this protein is Elongation factor G.